Here is a 557-residue protein sequence, read N- to C-terminus: Proline--tRNA ligase (557 aa).

Belongs to the class-II aminoacyl-tRNA synthetase family. ProS type 1 subfamily. As to quaternary structure, homodimer.

It localises to the cytoplasm. The enzyme catalyses tRNA(Pro) + L-proline + ATP = L-prolyl-tRNA(Pro) + AMP + diphosphate. Catalyzes the attachment of proline to tRNA(Pro) in a two-step reaction: proline is first activated by ATP to form Pro-AMP and then transferred to the acceptor end of tRNA(Pro). As ProRS can inadvertently accommodate and process non-cognate amino acids such as alanine and cysteine, to avoid such errors it has two additional distinct editing activities against alanine. One activity is designated as 'pretransfer' editing and involves the tRNA(Pro)-independent hydrolysis of activated Ala-AMP. The other activity is designated 'posttransfer' editing and involves deacylation of mischarged Ala-tRNA(Pro). The misacylated Cys-tRNA(Pro) is not edited by ProRS. This is Proline--tRNA ligase from Baumannia cicadellinicola subsp. Homalodisca coagulata.